The following is a 169-amino-acid chain: Glutathione peroxidase (169 aa).

The active site involves U43. Residue U43 is a non-standard amino acid, selenocysteine.

This sequence belongs to the glutathione peroxidase family.

The enzyme catalyses 2 glutathione + H2O2 = glutathione disulfide + 2 H2O. The sequence is that of Glutathione peroxidase (GPX1) from Schistosoma mansoni (Blood fluke).